Reading from the N-terminus, the 281-residue chain is ATP synthase gamma chain (281 aa).

This sequence belongs to the ATPase gamma chain family. In terms of assembly, F-type ATPases have 2 components, CF(1) - the catalytic core - and CF(0) - the membrane proton channel. CF(1) has five subunits: alpha(3), beta(3), gamma(1), delta(1), epsilon(1). CF(0) has three main subunits: a, b and c.

Its subcellular location is the cell membrane. Its function is as follows. Produces ATP from ADP in the presence of a proton gradient across the membrane. The gamma chain is believed to be important in regulating ATPase activity and the flow of protons through the CF(0) complex. The protein is ATP synthase gamma chain of Clostridium pasteurianum.